The primary structure comprises 191 residues: Prostaglandin-H2 D-isomerase (191 aa).

The signal sequence occupies residues 1–24; that stretch reads MAALHTLWMGLVLLGVLGVLQTRA. Q25 is modified (pyrrolidone carboxylic acid). Residue N51 is glycosylated (N-linked (GlcNAc...) asparagine). C65 (nucleophile) is an active-site residue. N78 carries N-linked (GlcNAc...) asparagine glycosylation. Residues C89 and C186 are joined by a disulfide bond.

Belongs to the calycin superfamily. Lipocalin family. In terms of assembly, monomer. Post-translationally, N- and O-glycosylated. Both N-glycosylation recognition sites are almost quantitatively occupied by N-glycans of the biantennary complex type, with a considerable proportion of structures bearing a bisecting GlcNAc. N-glycan at Asn-78: dHex1Hex5HexNAc4. Agalacto structure as well as sialylated and nonsialylated oligosaccharides bearing alpha2-3- and/or alpha2-6-linked NeuNAc are present.

The protein resides in the rough endoplasmic reticulum. It localises to the nucleus membrane. It is found in the golgi apparatus. Its subcellular location is the cytoplasm. The protein localises to the perinuclear region. The protein resides in the secreted. It carries out the reaction prostaglandin H2 = prostaglandin D2. Functionally, catalyzes the conversion of PGH2 to PGD2, a prostaglandin involved in smooth muscle contraction/relaxation and a potent inhibitor of platelet aggregation. Involved in a variety of CNS functions, such as sedation, NREM sleep and PGE2-induced allodynia, and may have an anti-apoptotic role in oligodendrocytes. Binds small non-substrate lipophilic molecules, including biliverdin, bilirubin, retinal, retinoic acid and thyroid hormone, and may act as a scavenger for harmful hydrophobic molecules and as a secretory retinoid and thyroid hormone transporter. Possibly involved in development and maintenance of the blood-brain, blood-retina, blood-aqueous humor and blood-testis barrier. It is likely to play important roles in both maturation and maintenance of the central nervous system and male reproductive system. Involved in PLA2G3-dependent maturation of mast cells. PLA2G3 is secreted by immature mast cells and acts on nearby fibroblasts upstream to PTDGS to synthesize PGD2, which in turn promotes mast cell maturation and degranulation via PTGDR. The chain is Prostaglandin-H2 D-isomerase (PTGDS) from Felis catus (Cat).